Here is a 497-residue protein sequence, read N- to C-terminus: Cobyric acid synthase (497 aa).

One can recognise a GATase cobBQ-type domain in the interval glutamate 250 to tryptophan 445. The active-site Nucleophile is the cysteine 331. The active site involves histidine 437.

This sequence belongs to the CobB/CobQ family. CobQ subfamily.

Its pathway is cofactor biosynthesis; adenosylcobalamin biosynthesis. Its function is as follows. Catalyzes amidations at positions B, D, E, and G on adenosylcobyrinic A,C-diamide. NH(2) groups are provided by glutamine, and one molecule of ATP is hydrogenolyzed for each amidation. This is Cobyric acid synthase from Acaryochloris marina (strain MBIC 11017).